A 309-amino-acid polypeptide reads, in one-letter code: Porphobilinogen deaminase (309 aa).

Position 243 is an S-(dipyrrolylmethanemethyl)cysteine (Cys-243).

It belongs to the HMBS family. As to quaternary structure, monomer. Dipyrromethane serves as cofactor.

The enzyme catalyses 4 porphobilinogen + H2O = hydroxymethylbilane + 4 NH4(+). Its pathway is porphyrin-containing compound metabolism; protoporphyrin-IX biosynthesis; coproporphyrinogen-III from 5-aminolevulinate: step 2/4. Tetrapolymerization of the monopyrrole PBG into the hydroxymethylbilane pre-uroporphyrinogen in several discrete steps. This is Porphobilinogen deaminase from Deinococcus geothermalis (strain DSM 11300 / CIP 105573 / AG-3a).